We begin with the raw amino-acid sequence, 98 residues long: Feather keratin 4 (98 aa).

Ser-2 carries the post-translational modification N-acetylserine.

It belongs to the avian keratin family. In terms of assembly, the avian keratins (F-ker, S-ker, C-ker and B-ker) are a complex mixture of very similar polypeptides.

The polypeptide is Feather keratin 4 (Gallus gallus (Chicken)).